A 356-amino-acid polypeptide reads, in one-letter code: uncharacterized protein (356 aa).

6 consecutive transmembrane segments (helical) span residues 2–22, 35–55, 76–96, 99–119, 124–144, and 151–171; these read FEAI…FHRL, EYVT…PIPF, NMIY…FIFG, IIYG…GPFL, IISL…LALL, and VEIL…AITF. Residues 218 to 353 enclose the GGDEF domain; the sequence is QSLALLLIDI…GRNKVMFNPI (136 aa).

Its subcellular location is the cell membrane. This is an uncharacterized protein from Staphylococcus epidermidis (strain ATCC 35984 / DSM 28319 / BCRC 17069 / CCUG 31568 / BM 3577 / RP62A).